A 141-amino-acid polypeptide reads, in one-letter code: Sigma factor binding protein 2, chloroplastic (141 aa).

Positions 1-20 (MDQSSSTLLINQRKSSSSPT) are enriched in polar residues. The tract at residues 1–36 (MDQSSSTLLINQRKSSSSPTRIPPKQKRKSTTTHKP) is disordered. The N-terminal 38 residues, 1 to 38 (MDQSSSTLLINQRKSSSSPTRIPPKQKRKSTTTHKPIK), are a transit peptide targeting the chloroplast. A Bipartite nuclear localization signal motif is present at residues 13 to 29 (RKSSSSPTRIPPKQKRK). Residues 24 to 36 (PKQKRKSTTTHKP) are compositionally biased toward basic residues. Positions 55-64 (FRELVQELTG) match the VQ motif.

In terms of assembly, interacts with sigma factors in chloroplast. Interacts with WRKY33 in the nucleus.

The protein resides in the plastid. Its subcellular location is the chloroplast. It localises to the nucleus. In terms of biological role, functions as activator of WRKY33 in plant defense against necrotrophic pathogens by stimulating the DNA-binding activity of WRKY33. In Arabidopsis thaliana (Mouse-ear cress), this protein is Sigma factor binding protein 2, chloroplastic (SIB2).